A 105-amino-acid polypeptide reads, in one-letter code: Nucleoid-associated protein Sca_0120 (105 aa).

Positions 1–36 are disordered; it reads MRGGGNMQQMMKQMQKMQKKMAEEQEKLKDEKVEGS. Residues 7 to 16 are compositionally biased toward low complexity; the sequence is MQQMMKQMQK. Residues 20–34 show a composition bias toward basic and acidic residues; that stretch reads KMAEEQEKLKDEKVE.

Belongs to the YbaB/EbfC family. In terms of assembly, homodimer.

The protein resides in the cytoplasm. It localises to the nucleoid. Binds to DNA and alters its conformation. May be involved in regulation of gene expression, nucleoid organization and DNA protection. This Staphylococcus carnosus (strain TM300) protein is Nucleoid-associated protein Sca_0120.